Consider the following 256-residue polypeptide: Ubiquinone/menaquinone biosynthesis C-methyltransferase UbiE (256 aa).

The segment covering 1 to 19 has biased composition (polar residues); it reads MQNRSSSPDSSSAGNTHFG. The interval 1-24 is disordered; it reads MQNRSSSPDSSSAGNTHFGFQSVP. Residues Thr-81, Asp-102, and 128–129 contribute to the S-adenosyl-L-methionine site; that span reads DA.

Belongs to the class I-like SAM-binding methyltransferase superfamily. MenG/UbiE family.

It carries out the reaction a 2-demethylmenaquinol + S-adenosyl-L-methionine = a menaquinol + S-adenosyl-L-homocysteine + H(+). The enzyme catalyses a 2-methoxy-6-(all-trans-polyprenyl)benzene-1,4-diol + S-adenosyl-L-methionine = a 5-methoxy-2-methyl-3-(all-trans-polyprenyl)benzene-1,4-diol + S-adenosyl-L-homocysteine + H(+). The protein operates within quinol/quinone metabolism; menaquinone biosynthesis; menaquinol from 1,4-dihydroxy-2-naphthoate: step 2/2. Its pathway is cofactor biosynthesis; ubiquinone biosynthesis. Methyltransferase required for the conversion of demethylmenaquinol (DMKH2) to menaquinol (MKH2) and the conversion of 2-polyprenyl-6-methoxy-1,4-benzoquinol (DDMQH2) to 2-polyprenyl-3-methyl-6-methoxy-1,4-benzoquinol (DMQH2). The sequence is that of Ubiquinone/menaquinone biosynthesis C-methyltransferase UbiE from Bordetella avium (strain 197N).